Here is a 295-residue protein sequence, read N- to C-terminus: Bifunctional protein FolD (295 aa).

Residues Gly-166–Ser-168, Ser-195, and Ile-236 each bind NADP(+).

It belongs to the tetrahydrofolate dehydrogenase/cyclohydrolase family. Homodimer.

The enzyme catalyses (6R)-5,10-methylene-5,6,7,8-tetrahydrofolate + NADP(+) = (6R)-5,10-methenyltetrahydrofolate + NADPH. It carries out the reaction (6R)-5,10-methenyltetrahydrofolate + H2O = (6R)-10-formyltetrahydrofolate + H(+). Its pathway is one-carbon metabolism; tetrahydrofolate interconversion. Functionally, catalyzes the oxidation of 5,10-methylenetetrahydrofolate to 5,10-methenyltetrahydrofolate and then the hydrolysis of 5,10-methenyltetrahydrofolate to 10-formyltetrahydrofolate. The chain is Bifunctional protein FolD from Chlorobium phaeovibrioides (strain DSM 265 / 1930) (Prosthecochloris vibrioformis (strain DSM 265)).